The primary structure comprises 287 residues: DegV domain-containing protein DR_0500 (287 aa).

The DegV domain maps to 7 to 280 (FAVVTDGGLD…PRALGVAAAP (274 aa)). Residues S62 and S93 each contribute to the hexadecanoate site.

Its function is as follows. May bind long-chain fatty acids, such as palmitate, and may play a role in lipid transport or fatty acid metabolism. The protein is DegV domain-containing protein DR_0500 of Deinococcus radiodurans (strain ATCC 13939 / DSM 20539 / JCM 16871 / CCUG 27074 / LMG 4051 / NBRC 15346 / NCIMB 9279 / VKM B-1422 / R1).